Consider the following 498-residue polypeptide: ATP synthase subunit beta, chloroplastic (498 aa).

Residue glycine 172 to threonine 179 coordinates ATP.

The protein belongs to the ATPase alpha/beta chains family. In terms of assembly, F-type ATPases have 2 components, CF(1) - the catalytic core - and CF(0) - the membrane proton channel. CF(1) has five subunits: alpha(3), beta(3), gamma(1), delta(1), epsilon(1). CF(0) has four main subunits: a(1), b(1), b'(1) and c(9-12).

It localises to the plastid. It is found in the chloroplast thylakoid membrane. The catalysed reaction is ATP + H2O + 4 H(+)(in) = ADP + phosphate + 5 H(+)(out). Functionally, produces ATP from ADP in the presence of a proton gradient across the membrane. The catalytic sites are hosted primarily by the beta subunits. This Beta vulgaris (Sugar beet) protein is ATP synthase subunit beta, chloroplastic.